The chain runs to 1372 residues: Serine protease pic autotransporter (1372 aa).

Positions 1 to 55 (MNKVYSLKYCPVTGGLIAVSELARRVIKKTCRRLTHILLAGIPAICLCYSQISQA) are cleaved as a signal peptide. The region spanning 56-301 (GIVRSDIAYQ…NVIPTDYLNQ (246 aa)) is the Peptidase S6 domain. Active-site charge relay system residues include H127, D155, and S258. Residues 1106–1372 (DTNGDAGAWA…AVNANFRYMF (267 aa)) form the Autotransporter domain.

Post-translationally, cleaved to release the mature protein from the outer membrane.

It localises to the periplasm. The protein resides in the secreted. The protein localises to the cell surface. Its subcellular location is the cell outer membrane. Involved in intestinal colonization, displays in vitro mucinolytic activity, serum resistance, and hemagglutination. Important to penetrate the intestinal mucus layer. This chain is Serine protease pic autotransporter (pic), found in Shigella flexneri.